Consider the following 256-residue polypeptide: DNA repair protein RecO (256 aa).

It belongs to the RecO family.

Its function is as follows. Involved in DNA repair and RecF pathway recombination. The polypeptide is DNA repair protein RecO (Bartonella henselae (strain ATCC 49882 / DSM 28221 / CCUG 30454 / Houston 1) (Rochalimaea henselae)).